Consider the following 134-residue polypeptide: Translation initiation factor 2 subunit beta (134 aa).

It belongs to the eIF-2-beta/eIF-5 family. As to quaternary structure, heterotrimer composed of an alpha, a beta and a gamma chain.

Its function is as follows. eIF-2 functions in the early steps of protein synthesis by forming a ternary complex with GTP and initiator tRNA. The chain is Translation initiation factor 2 subunit beta from Pyrobaculum aerophilum (strain ATCC 51768 / DSM 7523 / JCM 9630 / CIP 104966 / NBRC 100827 / IM2).